Consider the following 347-residue polypeptide: Protein pelota homolog (347 aa).

It belongs to the eukaryotic release factor 1 family. Pelota subfamily. In terms of assembly, monomer. It depends on a divalent metal cation as a cofactor.

It is found in the cytoplasm. Its function is as follows. May function in recognizing stalled ribosomes, interact with stem-loop structures in stalled mRNA molecules, and effect endonucleolytic cleavage of the mRNA. May play a role in the release non-functional ribosomes and degradation of damaged mRNAs. Has endoribonuclease activity. This chain is Protein pelota homolog, found in Methanothrix thermoacetophila (strain DSM 6194 / JCM 14653 / NBRC 101360 / PT) (Methanosaeta thermophila).